The following is a 59-amino-acid chain: ISEVKMDAEFRHDSGYEVHHQKLVFFAEDVGSNKGAIIGLMVGGVVIATVIVITLVMLK.

The Extracellular portion of the chain corresponds to 1 to 34; sequence ISEVKMDAEFRHDSGYEVHHQKLVFFAEDVGSNK. A helical transmembrane segment spans residues 35 to 58; the sequence is GAIIGLMVGGVVIATVIVITLVML. Residue Lys-59 is a topological domain, cytoplasmic.

It belongs to the APP family. Binds, via its C-terminus, to the PID domain of several cytoplasmic proteins, including APBB family members, the APBA family, MAPK8IP1, SHC1 and NUMB and DAB1. Binding to DAB1 inhibits its serine phosphorylation. Interacts (via NPXY motif) with DAB2 (via PID domain); the interaction is impaired by tyrosine phosphorylation of the NPXY motif. Also interacts with GPCR-like protein BPP, APPBP1, IB1, KNS2 (via its TPR domains), APPBP2 (via BaSS) and DDB1. In vitro, it binds MAPT via the MT-binding domains. Associates with microtubules in the presence of ATP and in a kinesin-dependent manner. Interacts, through a C-terminal domain, with GNAO1. Interacts with CPEB1, ANKS1B and AGER. Interacts with ITM2B. Interacts with ITM2C. Interacts with IDE. Can form homodimers; dimerization is enhanced in the presence of Cu(2+) ions. Can form homodimers; this is promoted by heparin binding. Interacts with SORL1 (via N-terminal ectodomain); this interaction retains APP in the trans-Golgi network and reduces processing into soluble APP-alpha and amyloid-beta peptides. Interacts with PLD3. Interacts with VDAC1. Interacts with NSG1; could regulate APP processing. Amyloid-beta protein 42 interacts with FPR2. Interacts with LRRK2. Interacts (via cytoplasmic domain) with KIF5B. Interacts (via C-terminus) with APBB2/FE65L1 (via C-terminus). Interacts (via intracellular domain) with APBB3. Post-translationally, proteolytically processed under normal cellular conditions. Cleavage either by alpha-secretase, beta-secretase or theta-secretase leads to generation and extracellular release of soluble APP peptides, S-APP-alpha and S-APP-beta, and the retention of corresponding membrane-anchored C-terminal fragments, C80, C83 and C99. Subsequent processing of C80 and C83 by gamma-secretase yields P3 peptides. This is the major secretory pathway and is non-amyloidogenic. Alternatively, presenilin/nicastrin-mediated gamma-secretase processing of C99 releases the amyloid-beta proteins, amyloid-beta protein 40 and amyloid-beta protein 42, major components of amyloid plaques, and the cytotoxic C-terminal fragments, gamma-CTF(50), gamma-CTF(57) and gamma-CTF(59). PSEN1 cleavage is more efficient with C83 than with C99 as substrate (in vitro). Amyloid-beta protein 40 and Amyloid-beta protein 42 are cleaved by ACE. Many other minor amyloid-beta peptides, amyloid-beta 1-X peptides, are found in cerebral spinal fluid (CSF) including the amyloid-beta X-15 peptides, produced from the cleavage by alpha-secretase.

The protein resides in the cell membrane. Its subcellular location is the membrane. It localises to the perikaryon. The protein localises to the cell projection. It is found in the growth cone. The protein resides in the clathrin-coated pit. Its subcellular location is the early endosome. It localises to the cytoplasmic vesicle. The protein localises to the secreted. It is found in the cell surface. The protein resides in the nucleus. Its subcellular location is the cytoplasm. Its function is as follows. Functions as a cell surface receptor and performs physiological functions on the surface of neurons relevant to neurite growth, neuronal adhesion and axonogenesis. Interaction between APP molecules on neighboring cells promotes synaptogenesis. Involved in cell mobility and transcription regulation through protein-protein interactions. Can promote transcription activation through binding to APBB1-KAT5 and inhibit Notch signaling through interaction with Numb. Couples to apoptosis-inducing pathways such as those mediated by G(o) and JIP. Inhibits G(o)-alpha ATPase activity. Acts as a kinesin I membrane receptor, mediating the axonal transport of beta-secretase and presenilin 1. By acting as a kinesin I membrane receptor, plays a role in axonal anterograde transport of cargo towards synapses in axons. May be involved in copper homeostasis/oxidative stress through copper ion reduction. In vitro, copper-metallated APP induces neuronal death directly or is potentiated through Cu(2+)-mediated low-density lipoprotein oxidation. Can regulate neurite outgrowth through binding to components of the extracellular matrix such as heparin and collagen I and IV. Induces a AGER-dependent pathway that involves activation of p38 MAPK, resulting in internalization of amyloid-beta peptide and mitochondrial dysfunction in cultured cortical neurons. Provides Cu(2+) ions for GPC1 which are required for release of nitric oxide (NO) and subsequent degradation of the heparan sulfate chains on GPC1. This is Amyloid-beta precursor protein (APP) from Bos taurus (Bovine).